The sequence spans 1483 residues: Tyrosine-protein kinase BAZ1B (1483 aa).

Positions 20-126 constitute a WAC domain; sequence EPLFTIPHTQ…GEECDFEVGK (107 aa). The disordered stretch occupies residues 145–212; it reads EEATEKKSDG…TSLKKGERKW (68 aa). Composition is skewed to basic and acidic residues over residues 148–165 and 172–195; these read TEKK…DKEN and DHQK…DRAR. Residues S152, S158, and S161 each carry the phosphoserine modification. A C motif motif is present at residues 207–213; that stretch reads KGERKWA. A Phosphothreonine modification is found at T266. The interval 302–333 is disordered; the sequence is NPSTKRKNTGSPDRKPSKKSKTDNSSLSSPLN. S330, S345, S347, S349, S361, and S374 each carry phosphoserine. Disordered regions lie at residues 379-432 and 446-470; these read HTNF…KTPK and GTQK…PHKH. 2 stretches are compositionally biased toward basic residues: residues 384–395 and 423–432; these read IPKKGPPAKKPG and SPKKGLKTPK. Positions 533 to 586 form a coiled coil; that stretch reads KRWASMSEEQRKEYLKKKREELKKKLKEKAKERREKEMLERLEKQKRYEDQELT. One can recognise a DDT domain in the interval 604–668; that stretch reads NTLFGDVAMV…LQTLLQDEIA (65 aa). Phosphoserine occurs at positions 699, 705, 708, and 716. Residues 768–814 adopt a coiled-coil conformation; it reads TRQQMSAELWKERLAVLKEENDKKRAEKQKRKEMEAKNKENGKVENG. The segment covering 788 to 810 has biased composition (basic and acidic residues); sequence NDKKRAEKQKRKEMEAKNKENGK. Positions 788 to 817 are disordered; the sequence is NDKKRAEKQKRKEMEAKNKENGKVENGLGK. K826 is covalently cross-linked (Glycyl lysine isopeptide (Lys-Gly) (interchain with G-Cter in SUMO1); alternate). K826 is covalently cross-linked (Glycyl lysine isopeptide (Lys-Gly) (interchain with G-Cter in SUMO2); alternate). Residues 850-893 adopt a coiled-coil conformation; the sequence is IQAKKEREIQEREMKVKLERQAEEERIRKHKAAAEKAFQEGIAK. Residue K853 forms a Glycyl lysine isopeptide (Lys-Gly) (interchain with G-Cter in SUMO2) linkage. Phosphoserine is present on S947. Residues K1043, K1089, and K1107 each participate in a glycyl lysine isopeptide (Lys-Gly) (interchain with G-Cter in SUMO2) cross-link. The PHD-type zinc-finger motif lies at 1184-1234; sequence NARCKVCRKKGEDDKLILCDECNKAFHLFCLRPALYEVPDGEWQCPACQPA. The tract at residues 1237-1326 is disordered; it reads RRNSRGRNYT…PKAPPVDDAE (90 aa). A coiled-coil region spans residues 1245-1283; it reads YTEESASEDSEDDESDEEEEEEEEEEEEEDYEVAGLRLR. Residues 1249 to 1276 are compositionally biased toward acidic residues; it reads SASEDSEDDESDEEEEEEEEEEEEEDYE. Composition is skewed to basic residues over residues 1282 to 1292 and 1301 to 1316; these read LRPRKTIRGKH and SGRR…RRSQ. The residue at position 1315 (S1315) is a Phosphoserine. K1335 carries the N6-acetyllysine modification. The Bromo domain occupies 1339 to 1443; that stretch reads RRQSLELQKC…QCLVALLHKH (105 aa). Phosphoserine is present on residues S1342 and S1468. The disordered stretch occupies residues 1455–1483; that stretch reads KKFPDRLAEDEGDSEPEAVGQSRGRRQKK.

Belongs to the WAL family. BAZ1B subfamily. As to quaternary structure, component of the WICH-1 ISWI chromatin remodeling complex, at least composed of SMARCA1 and BAZ1B/WSTF, which regulates the spacing of histone octamers on the DNA template to facilitate access to DNA. Within the WICH-1 ISWI chromatin remodeling complex interacts with SMARCA1; the interaction is direct. Component of the WICH-5 ISWI chromatin remodeling complex (also called the WICH complex), at least composed of SMARCA5/SNF2H and BAZ1B/WSTF, which regulates the spacing of histone octamers on the DNA template to facilitate access to DNA. Within the WICH-5 ISWI chromatin remodeling complex interacts with SMARCA5/SNF2H; the interaction is direct. Component of the B-WICH chromatin remodeling complex, at least composed of SMARCA5/SNF2H, BAZ1B/WSTF, SF3B1, DEK, MYO1C, ERCC6, MYBBP1A and DDX21. Within the B-WICH chromatin remodeling complex, interacts with SMARCA5/SNF2H, DDX21, DEK, MYBBP1A, SF3B1, ERCC6 and MYO1C. Interacts with PCNA; the interaction is direct and is required for BAZ1B/WSTF binding to replication foci during S phase. Interacts with CDT1. The cofactor is Mn(2+). In terms of tissue distribution, ubiquitously expressed with high levels of expression in heart, brain, placenta, skeletal muscle and ovary.

Its subcellular location is the nucleus. It catalyses the reaction L-tyrosyl-[protein] + ATP = O-phospho-L-tyrosyl-[protein] + ADP + H(+). In terms of biological role, atypical tyrosine-protein kinase that plays a central role in chromatin remodeling and acts as a transcription regulator. Involved in DNA damage response by phosphorylating 'Tyr-142' of histone H2AX (H2AXY142ph). H2AXY142ph plays a central role in DNA repair and acts as a mark that distinguishes between apoptotic and repair responses to genotoxic stress. Regulatory subunit of the ATP-dependent WICH-1 and WICH-5 ISWI chromatin remodeling complexes, which form ordered nucleosome arrays on chromatin and facilitate access to DNA during DNA-templated processes such as DNA replication, transcription, and repair. Both complexes regulate the spacing of nucleosomes along the chromatin and have the ability to slide mononucleosomes to the center of a DNA template. The WICH-1 ISWI chromatin remodeling complex has a lower ATP hydrolysis rate than the WICH-5 ISWI chromatin remodeling complex. The WICH-5 ISWI chromatin-remodeling complex regulates the transcription of various genes, has a role in RNA polymerase I transcription. Within the B-WICH complex has a role in RNA polymerase III transcription. Mediates the recruitment of the WICH-5 ISWI chromatin remodeling complex to replication foci during DNA replication. This is Tyrosine-protein kinase BAZ1B (BAZ1B) from Homo sapiens (Human).